A 396-amino-acid polypeptide reads, in one-letter code: Flavohemoprotein (396 aa).

Positions 1–136 (MLDAQTIATV…LANVFIHREA (136 aa)) constitute a Globin domain. Position 85 (His-85) interacts with heme b. Residues Tyr-95 and Glu-135 each act as charge relay system in the active site. Residues 147–396 (GGWEGTRPFR…YECFGPHKVL (250 aa)) are reductase. Residues 150-255 (EGTRPFRIVA…AAPAGDFFMN (106 aa)) form the FAD-binding FR-type domain. Residues Tyr-188 and 204–207 (RQYS) contribute to the FAD site. Residue 268–273 (GVGQTP) coordinates NADP(+). 389-392 (CFGP) is a binding site for FAD.

This sequence belongs to the globin family. Two-domain flavohemoproteins subfamily. It in the C-terminal section; belongs to the flavoprotein pyridine nucleotide cytochrome reductase family. Heme b serves as cofactor. The cofactor is FAD.

The enzyme catalyses 2 nitric oxide + NADPH + 2 O2 = 2 nitrate + NADP(+) + H(+). It catalyses the reaction 2 nitric oxide + NADH + 2 O2 = 2 nitrate + NAD(+) + H(+). Functionally, is involved in NO detoxification in an aerobic process, termed nitric oxide dioxygenase (NOD) reaction that utilizes O(2) and NAD(P)H to convert NO to nitrate, which protects the bacterium from various noxious nitrogen compounds. Therefore, plays a central role in the inducible response to nitrosative stress. This Salmonella typhi protein is Flavohemoprotein.